The sequence spans 414 residues: Coenzyme A biosynthesis bifunctional protein CoaBC (414 aa).

The interval 1–191 is phosphopantothenoylcysteine decarboxylase; the sequence is MSARKRIVVG…ALPYDMAGVK (191 aa). The interval 192 to 414 is phosphopantothenate--cysteine ligase; sequence ALVTAGGTRE…IAAFLKSQDG (223 aa). CTP is bound by residues 275-277, Asp-281, Lys-291, 293-294, 308-311, Phe-332, Lys-350, and Lys-354; these read MAA, KK, and DDVL.

This sequence in the N-terminal section; belongs to the HFCD (homo-oligomeric flavin containing Cys decarboxylase) superfamily. It in the C-terminal section; belongs to the PPC synthetase family. In terms of assembly, homododecamer. The cofactor is Mg(2+). Requires FMN as cofactor.

The catalysed reaction is N-[(R)-4-phosphopantothenoyl]-L-cysteine + H(+) = (R)-4'-phosphopantetheine + CO2. It carries out the reaction (R)-4'-phosphopantothenate + L-cysteine + CTP = N-[(R)-4-phosphopantothenoyl]-L-cysteine + CMP + diphosphate + H(+). It participates in cofactor biosynthesis; coenzyme A biosynthesis; CoA from (R)-pantothenate: step 2/5. Its pathway is cofactor biosynthesis; coenzyme A biosynthesis; CoA from (R)-pantothenate: step 3/5. With respect to regulation, two related chemical scaffolds that potently inhibit the activity of the CoaB moiety of CoaBC through a cryptic allosteric site that sits in the dimer interface region of the CoaB enzyme were identified. Functionally, catalyzes two sequential steps in the biosynthesis of coenzyme A. In the first step cysteine is conjugated to 4'-phosphopantothenate to form 4-phosphopantothenoylcysteine. In the second step the latter compound is decarboxylated to form 4'-phosphopantotheine. The chain is Coenzyme A biosynthesis bifunctional protein CoaBC from Mycolicibacterium smegmatis (strain ATCC 700084 / mc(2)155) (Mycobacterium smegmatis).